The chain runs to 623 residues: Membrane protein insertase YidC (623 aa).

Transmembrane regions (helical) follow at residues L8–P28, M379–Y399, L449–I469, T507–L527, and I543–V563. A compositionally biased stretch (low complexity) spans K601–P617. The disordered stretch occupies residues K601–P623.

The protein belongs to the OXA1/ALB3/YidC family. Type 1 subfamily. As to quaternary structure, interacts with the Sec translocase complex via SecD. Specifically interacts with transmembrane segments of nascent integral membrane proteins during membrane integration.

Its subcellular location is the cell inner membrane. Functionally, required for the insertion and/or proper folding and/or complex formation of integral membrane proteins into the membrane. Involved in integration of membrane proteins that insert both dependently and independently of the Sec translocase complex, as well as at least some lipoproteins. Aids folding of multispanning membrane proteins. The sequence is that of Membrane protein insertase YidC from Cereibacter sphaeroides (strain ATCC 17029 / ATH 2.4.9) (Rhodobacter sphaeroides).